We begin with the raw amino-acid sequence, 166 residues long: Vasopressin-neurophysin 2-copeptin (166 aa).

A signal peptide spans 1–19; that stretch reads MPDATLPACFLSLLAFTSA. Cys20 and Cys25 are oxidised to a cystine. Residue Gly28 is modified to Glycine amide. 7 disulfide bridges follow: Cys41-Cys85, Cys44-Cys58, Cys52-Cys75, Cys59-Cys65, Cys92-Cys104, Cys98-Cys116, and Cys105-Cys110. N-linked (GlcNAc...) asparagine glycosylation is present at Asn133.

This sequence belongs to the vasopressin/oxytocin family. In terms of assembly, interacts with vasopressin receptors V1bR/AVPR1B (Ki=85 pM), V1aR/AVPR1A (Ki=0.6 nM) and V2R/AVPR2 (Ki=4.9 nM). Interacts with oxytocin receptor (OXTR) (Ki=110 nM).

The protein localises to the secreted. Functionally, neurophysin 2 specifically binds vasopressin. Vasopressin has a direct antidiuretic action on the kidney, it also causes vasoconstriction of the peripheral vessels. Acts by binding to vasopressin receptors (V1bR/AVPR1B, V1aR/AVPR1A, and V2R/AVPR2). The protein is Vasopressin-neurophysin 2-copeptin (AVP) of Bos taurus (Bovine).